The chain runs to 158 residues: SsrA-binding protein (158 aa).

The interval 133–158 (QLHDKRETEKKRDWNKEKGRLLRDKH) is disordered.

The protein belongs to the SmpB family.

The protein resides in the cytoplasm. Functionally, required for rescue of stalled ribosomes mediated by trans-translation. Binds to transfer-messenger RNA (tmRNA), required for stable association of tmRNA with ribosomes. tmRNA and SmpB together mimic tRNA shape, replacing the anticodon stem-loop with SmpB. tmRNA is encoded by the ssrA gene; the 2 termini fold to resemble tRNA(Ala) and it encodes a 'tag peptide', a short internal open reading frame. During trans-translation Ala-aminoacylated tmRNA acts like a tRNA, entering the A-site of stalled ribosomes, displacing the stalled mRNA. The ribosome then switches to translate the ORF on the tmRNA; the nascent peptide is terminated with the 'tag peptide' encoded by the tmRNA and targeted for degradation. The ribosome is freed to recommence translation, which seems to be the essential function of trans-translation. This Beijerinckia indica subsp. indica (strain ATCC 9039 / DSM 1715 / NCIMB 8712) protein is SsrA-binding protein.